Consider the following 218-residue polypeptide: MAATLGFRDLGLIDYETAWHAMKRFTDERGREAADEVWLVQHPPVFTQGQSGKAEHLLLPGNIPVVQVDRGGQVTYHGPGQLVAYLMLDVRRLGFGVRDLVTRIENTLIALLADYGVKAAAKADAPGVYVDGAKIASLGLRIRNGCSFHGLALNVDMDLEPFRRINPCGYAGLAMTQLSDQAGQIEFSEVSARLRAQLVKHLDYAEQATLTGGINHYD.

Positions 31–206 constitute a BPL/LPL catalytic domain; sequence REAADEVWLV…QLVKHLDYAE (176 aa). Substrate-binding positions include 70-77, 137-139, and 150-152; these read RGGQVTYH, SLG, and GLA. Catalysis depends on Cys-168, which acts as the Acyl-thioester intermediate.

The protein belongs to the LipB family.

The protein resides in the cytoplasm. It carries out the reaction octanoyl-[ACP] + L-lysyl-[protein] = N(6)-octanoyl-L-lysyl-[protein] + holo-[ACP] + H(+). Its pathway is protein modification; protein lipoylation via endogenous pathway; protein N(6)-(lipoyl)lysine from octanoyl-[acyl-carrier-protein]: step 1/2. Its function is as follows. Catalyzes the transfer of endogenously produced octanoic acid from octanoyl-acyl-carrier-protein onto the lipoyl domains of lipoate-dependent enzymes. Lipoyl-ACP can also act as a substrate although octanoyl-ACP is likely to be the physiological substrate. This Pseudomonas syringae pv. syringae (strain B728a) protein is Octanoyltransferase.